Consider the following 299-residue polypeptide: uncharacterized protein (299 aa).

Residues threonine 47 and tyrosine 109 each act as charge relay system in the active site. Catalysis depends on tyrosine 138, which acts as the Proton donor. Lysine 168 acts as the Schiff-base intermediate with substrate in catalysis.

Belongs to the DapA family. As to quaternary structure, homotetramer.

The protein localises to the cytoplasm. This is an uncharacterized protein from Chloroflexus aurantiacus (strain ATCC 29366 / DSM 635 / J-10-fl).